Reading from the N-terminus, the 251-residue chain is Imidazole glycerol phosphate synthase subunit HisF (251 aa).

Residues aspartate 11 and aspartate 130 contribute to the active site.

The protein belongs to the HisA/HisF family. As to quaternary structure, heterodimer of HisH and HisF.

It is found in the cytoplasm. It catalyses the reaction 5-[(5-phospho-1-deoxy-D-ribulos-1-ylimino)methylamino]-1-(5-phospho-beta-D-ribosyl)imidazole-4-carboxamide + L-glutamine = D-erythro-1-(imidazol-4-yl)glycerol 3-phosphate + 5-amino-1-(5-phospho-beta-D-ribosyl)imidazole-4-carboxamide + L-glutamate + H(+). Its pathway is amino-acid biosynthesis; L-histidine biosynthesis; L-histidine from 5-phospho-alpha-D-ribose 1-diphosphate: step 5/9. Its function is as follows. IGPS catalyzes the conversion of PRFAR and glutamine to IGP, AICAR and glutamate. The HisF subunit catalyzes the cyclization activity that produces IGP and AICAR from PRFAR using the ammonia provided by the HisH subunit. This chain is Imidazole glycerol phosphate synthase subunit HisF, found in Metallosphaera sedula (strain ATCC 51363 / DSM 5348 / JCM 9185 / NBRC 15509 / TH2).